Reading from the N-terminus, the 459-residue chain is ATP synthase subunit beta (459 aa).

Gly148–Thr155 is an ATP binding site.

Belongs to the ATPase alpha/beta chains family. As to quaternary structure, F-type ATPases have 2 components, CF(1) - the catalytic core - and CF(0) - the membrane proton channel. CF(1) has five subunits: alpha(3), beta(3), gamma(1), delta(1), epsilon(1). CF(0) has three main subunits: a(1), b(2) and c(9-12). The alpha and beta chains form an alternating ring which encloses part of the gamma chain. CF(1) is attached to CF(0) by a central stalk formed by the gamma and epsilon chains, while a peripheral stalk is formed by the delta and b chains.

It is found in the cell inner membrane. The catalysed reaction is ATP + H2O + 4 H(+)(in) = ADP + phosphate + 5 H(+)(out). Functionally, produces ATP from ADP in the presence of a proton gradient across the membrane. The catalytic sites are hosted primarily by the beta subunits. The sequence is that of ATP synthase subunit beta from Cellvibrio japonicus (strain Ueda107) (Pseudomonas fluorescens subsp. cellulosa).